We begin with the raw amino-acid sequence, 226 residues long: ATP synthase subunit a (226 aa).

6 consecutive transmembrane segments (helical) span residues 18–38 (FITGFFVVLTAVLMFLISLGA), 79–99 (LAGTIALYVFFSNMIGIIPGF), 105–125 (SWSFTLVLALIVFFYYHFEGI), 134–154 (FAHFAGPVKWLAPFMFPIEII), 179–199 (LIMLLLVPWAVPVAPFMVLFF), and 201–221 (GILQAFVFMILTYVYLAGAVL).

It belongs to the ATPase A chain family. F-type ATPases have 2 components, CF(1) - the catalytic core - and CF(0) - the membrane proton channel. CF(1) has five subunits: alpha(3), beta(3), gamma(1), delta(1), epsilon(1). CF(0) has three main subunits: a(1), b(2) and c(9-12). The alpha and beta chains form an alternating ring which encloses part of the gamma chain. CF(1) is attached to CF(0) by a central stalk formed by the gamma and epsilon chains, while a peripheral stalk is formed by the delta and b chains.

The protein resides in the cell inner membrane. Its function is as follows. Key component of the proton channel; it plays a direct role in the translocation of protons across the membrane. The sequence is that of ATP synthase subunit a from Helicobacter pylori (strain HPAG1).